We begin with the raw amino-acid sequence, 81 residues long: Acyl carrier protein (81 aa).

Positions 2 to 80 (ASKDEILAGL…DAVNFIDNAQ (79 aa)) constitute a Carrier domain. Residue Ser40 is modified to O-(pantetheine 4'-phosphoryl)serine.

The protein belongs to the acyl carrier protein (ACP) family. Post-translationally, 4'-phosphopantetheine is transferred from CoA to a specific serine of apo-ACP by AcpS. This modification is essential for activity because fatty acids are bound in thioester linkage to the sulfhydryl of the prosthetic group.

It is found in the cytoplasm. The protein operates within lipid metabolism; fatty acid biosynthesis. In terms of biological role, carrier of the growing fatty acid chain in fatty acid biosynthesis. The sequence is that of Acyl carrier protein from Kocuria rhizophila (strain ATCC 9341 / DSM 348 / NBRC 103217 / DC2201).